We begin with the raw amino-acid sequence, 162 residues long: Shikimate kinase (162 aa).

11 to 16 provides a ligand contact to ATP; that stretch reads GSGKSS. Mg(2+) is bound at residue serine 15. Residues aspartate 33, arginine 57, and glycine 80 each contribute to the substrate site. Arginine 116 lines the ATP pocket. Arginine 132 serves as a coordination point for substrate.

Belongs to the shikimate kinase family. Monomer. It depends on Mg(2+) as a cofactor.

Its subcellular location is the cytoplasm. The catalysed reaction is shikimate + ATP = 3-phosphoshikimate + ADP + H(+). It functions in the pathway metabolic intermediate biosynthesis; chorismate biosynthesis; chorismate from D-erythrose 4-phosphate and phosphoenolpyruvate: step 5/7. In terms of biological role, catalyzes the specific phosphorylation of the 3-hydroxyl group of shikimic acid using ATP as a cosubstrate. This is Shikimate kinase from Helicobacter pylori (strain G27).